The following is a 263-amino-acid chain: Lens fiber major intrinsic protein (263 aa).

Over 1-9 (MWELRSASF) the chain is Cytoplasmic. Residues 10–29 (WRAIFAEFFATLFYVFFGLG) traverse the membrane as a helical segment. At 30–41 (SSLRWAPGPLHV) the chain is on the extracellular side. The helical transmembrane segment at 42–59 (LQVALAFGLALATLVQTV) threads the bilayer. At 60–61 (GH) the chain is on the cytoplasmic side. Residues 62-77 (ISGAHVNPAVTFAFLV) constitute an intramembrane region (discontinuously helical). The short motif at 68 to 70 (NPA) is the NPA 1 element. Over 78–82 (GSQMS) the chain is Cytoplasmic. Residues 83 to 106 (LLRAFCYIAAQLLGAVAGAAVLYS) form a helical membrane-spanning segment. Over 107-127 (VTPPAVRGNLALNTLHAGVSV) the chain is Extracellular. A helical transmembrane segment spans residues 128 to 148 (GQATTVEIFLTLQFVLCIFAT). The Cytoplasmic segment spans residues 149-156 (YDERRNGR). Residues 157-175 (MGSVALAVGFSLTLGHLFG) traverse the membrane as a helical segment. The Extracellular portion of the chain corresponds to 176–178 (MYY). The segment at residues 179–193 (TGAGMNPARSFAPAI) is an intramembrane region (discontinuously helical). The short motif at 184 to 186 (NPA) is the NPA 2 element. At 194 to 200 (LTRNFSN) the chain is on the extracellular side. The helical transmembrane segment at 201–222 (HWVYWVGPIIGGGLGSLLYDFL) threads the bilayer. At 223–263 (LFPRLKSVSERLSILKGARPSDSNGQPEGTGEPVELKTQAL) the chain is on the cytoplasmic side. The tract at residues 227 to 237 (LKSVSERLSIL) is interaction with CALM. A phosphoserine mark is found at Ser235, Ser243, and Ser245. The tract at residues 240 to 263 (ARPSDSNGQPEGTGEPVELKTQAL) is disordered. A Deamidated asparagine modification is found at Asn246.

This sequence belongs to the MIP/aquaporin (TC 1.A.8) family. In terms of assembly, homotetramer; each monomer provides an independent water pore. Two homotetramers on opposing membranes can dimerize, forming a cell-cell junction. Interacts with CALM; the calcium-calmodulin/CALM complex interacts with the cytoplasmic domains of two aquaporins, leading to channel closure. Interacts with BFSP1 (via C-terminus); prevents calcium-dependent inhibition of the water channel activity. Subject to partial proteolytic cleavage in the eye lens core. Partial proteolysis promotes interactions between tetramers from adjoining membranes. In terms of processing, fatty acylated at Met-1 and Lys-238. The acyl modifications, in decreasing order of ion abundance, are: oleoyl (C18:1) &gt; palmitoyl (C16:0) &gt; stearoyl (C18:0) &gt; eicosenoyl (C20:1) &gt; dihomo-gamma-linolenoyl (C20:3) &gt; palmitoleoyl (C16:1) &gt; eicosadienoyl (C20:2).

The protein localises to the cell membrane. Its subcellular location is the cell junction. The catalysed reaction is H2O(in) = H2O(out). With respect to regulation, the water channel activity is inhibited by calcium through calmodulin/CALM. Aquaporins form homotetrameric transmembrane channels, with each monomer independently mediating water transport across the plasma membrane along its osmotic gradient. Specifically expressed in lens fiber cells, this aquaporin is crucial for maintaining lens water homeostasis and transparency. Beyond water permeability, it also acts as a cell-to-cell adhesion molecule, forming thin junctions between lens fiber cells that are essential for maintaining the ordered structure and transparency of the lens. The polypeptide is Lens fiber major intrinsic protein (Rattus norvegicus (Rat)).